We begin with the raw amino-acid sequence, 706 residues long: Lethal(3)malignant brain tumor-like protein 2 (706 aa).

The interval 1-85 is disordered; the sequence is MEKPRGVEET…GTPRSLDGSG (85 aa). Residue serine 13 is modified to Phosphoserine. Residues 15-26 show a composition bias toward acidic residues; the sequence is PMEEEEEDDDLE. Low complexity predominate over residues 39 to 50; that stretch reads SSAGSESSSYLE. A compositionally biased stretch (basic and acidic residues) spans 54 to 63; the sequence is EAEHEDREAG. Phosphoserine is present on serine 68. Threonine 77 is modified (phosphothreonine). The segment at 82–117 adopts an FCS-type zinc-finger fold; sequence DGSGSEPAVCEMCGIVGTREAFFSKTKRFCSVSCSR. Positions 91, 94, 111, and 115 each coordinate Zn(2+). MBT repeat units follow at residues 180–284, 292–392, 398–501, and 509–605; these read FDWG…LVPP, TDWK…IKLS, MAHH…LTPP, and FSWE…LQPP. At serine 339 the chain carries Phosphoserine. Lysine 406 is covalently cross-linked (Glycyl lysine isopeptide (Lys-Gly) (interchain with G-Cter in SUMO2)). Positions 606–669 are disordered; that stretch reads VATEPTTPLK…KAPSEPAPDE (64 aa). Over residues 620 to 635 the composition is skewed to basic residues; the sequence is TKKKKKQFGKKRKRIP. Residues lysine 648, lysine 660, and lysine 676 each participate in a glycyl lysine isopeptide (Lys-Gly) (interchain with G-Cter in SUMO2) cross-link. The disordered stretch occupies residues 685-706; the sequence is ADKALSPELPVPVENIKQETDD. Serine 690 carries the phosphoserine modification. Lysine 701 is covalently cross-linked (Glycyl lysine isopeptide (Lys-Gly) (interchain with G-Cter in SUMO1); alternate). Residue lysine 701 forms a Glycyl lysine isopeptide (Lys-Gly) (interchain with G-Cter in SUMO2); alternate linkage.

In terms of assembly, part of the E2F6.com-1 complex in G0 phase composed of E2F6, MGA, MAX, TFDP1, CBX3, BAT8, EUHMTASE1, RING1, RNF2, MBLR, BAT8 and YAF2.

It localises to the nucleus. Putative Polycomb group (PcG) protein. PcG proteins maintain the transcriptionally repressive state of genes, probably via a modification of chromatin, rendering it heritably changed in its expressibility. Its association with a chromatin-remodeling complex suggests that it may contribute to prevent expression of genes that trigger the cell into mitosis. Binds to monomethylated and dimethylated 'Lys-20' on histone H4. Binds histone H3 peptides that are monomethylated or dimethylated on 'Lys-4', 'Lys-9' or 'Lys-27'. The chain is Lethal(3)malignant brain tumor-like protein 2 (L3MBTL2) from Bos taurus (Bovine).